The chain runs to 211 residues: WUSCHEL-related homeobox 14 (211 aa).

Residues Ser-91 to Gln-155 constitute a DNA-binding region (homeobox; WUS-type). Residues Arg-147–Gly-183 are disordered.

It belongs to the WUS homeobox family. Expressed in root vasculature, pericycle and stamen. Expressed in the procambium during stem maturation.

The protein localises to the nucleus. In terms of biological role, acts redundantly with WOX4 downstream of the TDR/PXY receptor kinase to regulate procambial cell proliferation and differentiation in vascular tissue, independently of any role in vascular. Involved in the regulation of gibberellin (GA) biosynthesis pathway. Positively regulates the expression of the GA biosynthesis gene GA3OX1, and negatively regulates the expression of GA2OX1 during secondary growth, which increases bioactive GA content in the inflorescence stem. Promotes vascular cell differentiation in the inflorescence stem. Its function is as follows. Transcription factor which may be involved in developmental processes. The chain is WUSCHEL-related homeobox 14 (WOX14) from Arabidopsis thaliana (Mouse-ear cress).